The following is a 117-amino-acid chain: Large ribosomal subunit protein uL18 (117 aa).

The protein belongs to the universal ribosomal protein uL18 family. In terms of assembly, part of the 50S ribosomal subunit; part of the 5S rRNA/L5/L18/L25 subcomplex. Contacts the 5S and 23S rRNAs.

Functionally, this is one of the proteins that bind and probably mediate the attachment of the 5S RNA into the large ribosomal subunit, where it forms part of the central protuberance. This Thioalkalivibrio sulfidiphilus (strain HL-EbGR7) protein is Large ribosomal subunit protein uL18.